We begin with the raw amino-acid sequence, 68 residues long: Alpha-conotoxin-like Mr1.2 (68 aa).

A signal peptide spans 1–21 (MGMRMMFTVFLLVVLATTVVS). Positions 22–48 (FTSDRGSDGRNAAAKDKASDLVALTVK) are excised as a propeptide. 2 cysteine pairs are disulfide-bonded: cysteine 50/cysteine 56 and cysteine 51/cysteine 64. Residues 52 to 54 (SNP) form a ser-Xaa-Pro motif, crucial for potent interaction with nAChR region. Asparagine 65 bears the Asparagine amide mark.

Belongs to the conotoxin A superfamily. Expressed by the venom duct.

It localises to the secreted. In terms of biological role, alpha-conotoxins act on postsynaptic membranes, they bind to the nicotinic acetylcholine receptors (nAChR) and thus inhibit them. This is Alpha-conotoxin-like Mr1.2 from Conus marmoreus (Marble cone).